A 390-amino-acid chain; its full sequence is Glutamate 5-kinase (390 aa).

An ATP-binding site is contributed by Lys-29. Substrate-binding residues include Ser-69, Asp-156, and Asn-168. Residue 188–189 (TD) participates in ATP binding. The region spanning 295 to 374 (SGSLIVDAGA…EQFDRILGNN (80 aa)) is the PUA domain.

This sequence belongs to the glutamate 5-kinase family.

It is found in the cytoplasm. It carries out the reaction L-glutamate + ATP = L-glutamyl 5-phosphate + ADP. It functions in the pathway amino-acid biosynthesis; L-proline biosynthesis; L-glutamate 5-semialdehyde from L-glutamate: step 1/2. Catalyzes the transfer of a phosphate group to glutamate to form L-glutamate 5-phosphate. The protein is Glutamate 5-kinase of Psychrobacter cryohalolentis (strain ATCC BAA-1226 / DSM 17306 / VKM B-2378 / K5).